The primary structure comprises 908 residues: 26S proteasome non-ATPase regulatory subunit 2 (908 aa).

N-acetylmethionine is present on methionine 1. The segment at 1–51 (MEEGGRDKTPVQSQQPSATTPSGADEKSSGKERRDAGEKDKEQELSEEDKQ) is disordered. Phosphothreonine is present on residues threonine 9 and threonine 20. Residues 10-22 (PVQSQQPSATTPS) are compositionally biased toward polar residues. Residues 24–51 (ADEKSSGKERRDAGEKDKEQELSEEDKQ) show a composition bias toward basic and acidic residues. Serine 29 and serine 147 each carry phosphoserine. Tyrosine 194 carries the phosphotyrosine modification. A phosphoserine mark is found at serine 361 and serine 363. 5 PC repeats span residues 409–442 (SAAA…YIKS), 443–479 (GALL…TMRL), 480–514 (GSIF…SMEV), 517–551 (VTAL…TELK), and 560–589 (LGLG…PFRS). The residue at position 551 (lysine 551) is an N6-acetyllysine. The segment covering 623–643 (KEKEEDKDKKEKKDKDKKEAP) has biased composition (basic and acidic residues). A disordered region spans residues 623 to 645 (KEKEEDKDKKEKKDKDKKEAPAD). 2 PC repeats span residues 692–723 (LALA…EVSY) and 742–757 (AAML…KDPN). The segment at 708 to 903 (DTLSKFSHDA…LEGFVILRKN (196 aa)) is required for interaction with UBLCP1.

Belongs to the proteasome subunit S2 family. In terms of assembly, component of the 19S proteasome regulatory particle complex. The 26S proteasome consists of a 20S core particle (CP) and two 19S regulatory subunits (RP). The regulatory particle is made of a lid composed of 9 subunits, a base containing 6 ATPases and few additional components including PSMD2. Interacts with RPGRIP1L. Interacts with CRY1 in a KDM8-dependent manner. Interacts (via C-terminus) with phosphatase UBLCP1 (via ubiquitin-like domain); the interaction recruits UBLCP1 to the 19S regulatory particle where it dephosphorylates 19S subunit PSMC2/RPT1 which impairs PSMC2 ATPase activity and disrupts 26S proteasome assembly.

Its function is as follows. Component of the 26S proteasome, a multiprotein complex involved in the ATP-dependent degradation of ubiquitinated proteins. This complex plays a key role in the maintenance of protein homeostasis by removing misfolded or damaged proteins, which could impair cellular functions, and by removing proteins whose functions are no longer required. Therefore, the proteasome participates in numerous cellular processes, including cell cycle progression, apoptosis, or DNA damage repair. Binds to the intracellular domain of tumor necrosis factor type 1 receptor. The binding domain of TRAP1 and TRAP2 resides outside the death domain of TNFR1. The sequence is that of 26S proteasome non-ATPase regulatory subunit 2 (Psmd2) from Mus musculus (Mouse).